The primary structure comprises 1085 residues: RecBCD enzyme subunit RecC (1085 aa).

It belongs to the RecC family. As to quaternary structure, heterotrimer of RecB, RecC and RecD. All subunits contribute to DNA-binding.

Functionally, a helicase/nuclease that prepares dsDNA breaks (DSB) for recombinational DNA repair. Binds to DSBs and unwinds DNA via a highly rapid and processive ATP-dependent bidirectional helicase activity. Holoenzyme degrades any linearized DNA that is unable to undergo homologous recombination. In the holoenzyme this subunit recognizes the wild-type Chi sequence, and when added to isolated RecB increases its ATP-dependent helicase processivity. Unlike the case in E.coli, suppresses RecA-dependent homologous recombination, is instead required for single-strand annealing pathway repair of DSB. This chain is RecBCD enzyme subunit RecC, found in Mycolicibacterium smegmatis (strain ATCC 700084 / mc(2)155) (Mycobacterium smegmatis).